Consider the following 98-residue polypeptide: Cystatin-B (98 aa).

The residue at position 1 (M1) is an N-acetylmethionine. The Secondary area of contact signature appears at Q46–G50.

The protein belongs to the cystatin family. As to quaternary structure, able to form dimers stabilized by noncovalent forces.

It is found in the cytoplasm. Functionally, this is an intracellular thiol proteinase inhibitor. The sequence is that of Cystatin-B (CSTB) from Bos taurus (Bovine).